A 240-amino-acid chain; its full sequence is Urease accessory protein UreF (240 aa).

The protein belongs to the UreF family. As to quaternary structure, ureD, UreF and UreG form a complex that acts as a GTP-hydrolysis-dependent molecular chaperone, activating the urease apoprotein by helping to assemble the nickel containing metallocenter of UreC. The UreE protein probably delivers the nickel.

Its subcellular location is the cytoplasm. Required for maturation of urease via the functional incorporation of the urease nickel metallocenter. This is Urease accessory protein UreF from Bradyrhizobium sp. (strain BTAi1 / ATCC BAA-1182).